The chain runs to 82 residues: Cytochrome b559 subunit alpha (82 aa).

Residues 22 to 36 (IIHAVTLPAIFIAGF) traverse the membrane as a helical segment. His-24 contributes to the heme binding site.

Belongs to the PsbE/PsbF family. As to quaternary structure, heterodimer of an alpha subunit and a beta subunit. PSII is composed of 1 copy each of membrane proteins PsbA, PsbB, PsbC, PsbD, PsbE, PsbF, PsbH, PsbI, PsbJ, PsbK, PsbL, PsbM, PsbT, PsbX, PsbY, Psb30/Ycf12, peripheral proteins PsbO, CyanoQ (PsbQ), PsbU, PsbV and a large number of cofactors. It forms dimeric complexes. Heme b is required as a cofactor.

Its subcellular location is the cellular thylakoid membrane. Functionally, this b-type cytochrome is tightly associated with the reaction center of photosystem II (PSII). PSII is a light-driven water:plastoquinone oxidoreductase that uses light energy to abstract electrons from H(2)O, generating O(2) and a proton gradient subsequently used for ATP formation. It consists of a core antenna complex that captures photons, and an electron transfer chain that converts photonic excitation into a charge separation. The protein is Cytochrome b559 subunit alpha of Prochlorococcus marinus (strain SARG / CCMP1375 / SS120).